The following is a 730-amino-acid chain: Ribosomal RNA large subunit methyltransferase K/L (730 aa).

Positions 46–157 constitute a THUMP domain; it reads TAYRLCVWSR…RGEAILSLDL (112 aa). Residues 394–418 are disordered; that stretch reads GERREAQPEGTEARQQVPQASEPAR.

Belongs to the methyltransferase superfamily. RlmKL family.

The protein resides in the cytoplasm. It carries out the reaction guanosine(2445) in 23S rRNA + S-adenosyl-L-methionine = N(2)-methylguanosine(2445) in 23S rRNA + S-adenosyl-L-homocysteine + H(+). It catalyses the reaction guanosine(2069) in 23S rRNA + S-adenosyl-L-methionine = N(2)-methylguanosine(2069) in 23S rRNA + S-adenosyl-L-homocysteine + H(+). In terms of biological role, specifically methylates the guanine in position 2445 (m2G2445) and the guanine in position 2069 (m7G2069) of 23S rRNA. The chain is Ribosomal RNA large subunit methyltransferase K/L from Pseudomonas putida (strain ATCC 47054 / DSM 6125 / CFBP 8728 / NCIMB 11950 / KT2440).